The chain runs to 350 residues: Ribosomal RNA large subunit methyltransferase M (350 aa).

Residues 217 to 220 (APGG), Asp236, Asp256, and Asp272 each bind S-adenosyl-L-methionine. The Proton acceptor role is filled by Lys301.

The protein belongs to the class I-like SAM-binding methyltransferase superfamily. RNA methyltransferase RlmE family. RlmM subfamily. As to quaternary structure, monomer.

It localises to the cytoplasm. It carries out the reaction cytidine(2498) in 23S rRNA + S-adenosyl-L-methionine = 2'-O-methylcytidine(2498) in 23S rRNA + S-adenosyl-L-homocysteine + H(+). Catalyzes the 2'-O-methylation at nucleotide C2498 in 23S rRNA. This Teredinibacter turnerae (strain ATCC 39867 / T7901) protein is Ribosomal RNA large subunit methyltransferase M.